The primary structure comprises 522 residues: Sensory neuron membrane protein 1 (522 aa).

Residues 1–11 (MKLPKHLKFAA) lie on the Cytoplasmic side of the membrane. Residues 12 to 32 (GAGGAFLFGILFGWVMFPAIL) form a helical membrane-spanning segment. Residues 33-455 (KGQLKKEMAL…KFQLFYPKKA (423 aa)) lie on the Extracellular side of the membrane. 2 N-linked (GlcNAc...) asparagine glycosylation sites follow: Asn67 and Asn229. 3 cysteine pairs are disulfide-bonded: Cys268/Cys333, Cys297/Cys350, and Cys335/Cys339. The N-linked (GlcNAc...) asparagine glycan is linked to Asn438. The chain crosses the membrane as a helical span at residues 456–476 (VGVIKWLLVTFGGFGLIGCTI). Residues 477–522 (YHYKDRIMSFASSPGSAAVTKVKPEEVEQKDVSVIGQPQEPAKINM) are Cytoplasmic-facing.

Belongs to the CD36 family.

It localises to the cell membrane. Plays an olfactory role that is not restricted to pheromone sensitivity. The chain is Sensory neuron membrane protein 1 from Plutella xylostella (Diamondback moth).